A 220-amino-acid chain; its full sequence is Probable nicotinate-nucleotide adenylyltransferase (220 aa).

The protein belongs to the NadD family.

It carries out the reaction nicotinate beta-D-ribonucleotide + ATP + H(+) = deamido-NAD(+) + diphosphate. The protein operates within cofactor biosynthesis; NAD(+) biosynthesis; deamido-NAD(+) from nicotinate D-ribonucleotide: step 1/1. Its function is as follows. Catalyzes the reversible adenylation of nicotinate mononucleotide (NaMN) to nicotinic acid adenine dinucleotide (NaAD). The protein is Probable nicotinate-nucleotide adenylyltransferase of Laribacter hongkongensis (strain HLHK9).